Reading from the N-terminus, the 292-residue chain is uncharacterized protein (292 aa).

This is an uncharacterized protein from Acanthamoeba polyphaga (Amoeba).